The primary structure comprises 317 residues: Glutathione synthetase (317 aa).

Residues 125-311 (EKMFATLFPQ…IGGKLMDAID (187 aa)) enclose the ATP-grasp domain. 152-208 (TAKHADVILKPLDGMGGTSIFRHRAGDPNLSVILETLTALGTQQIMAQAYLPAIKDG) lines the ATP pocket. Positions 282 and 284 each coordinate Mg(2+).

The protein belongs to the prokaryotic GSH synthase family. Mg(2+) serves as cofactor. Requires Mn(2+) as cofactor.

It carries out the reaction gamma-L-glutamyl-L-cysteine + glycine + ATP = glutathione + ADP + phosphate + H(+). It functions in the pathway sulfur metabolism; glutathione biosynthesis; glutathione from L-cysteine and L-glutamate: step 2/2. In Pseudomonas putida (strain ATCC 47054 / DSM 6125 / CFBP 8728 / NCIMB 11950 / KT2440), this protein is Glutathione synthetase.